Consider the following 877-residue polypeptide: Dystroglycan 1 (877 aa).

Positions 1-29 are cleaved as a signal peptide; that stretch reads MRMSAGLSLLIPLWGRTFLLLLSVAVTQS. The interval 30-408 is required for laminin recognition; it reads RWPSEPSDAV…GHIRPTMTIP (379 aa). Residues 49–71 form an O-glycosylated at one site region; sequence SMHSVLSDLHEAVPTVVGIPDGT. N141 carries N-linked (GlcNAc...) asparagine glycosylation. A disulfide bond links C182 and C264. The segment at 316-468 is mucin-like domain; that stretch reads ATPTPVTAIG…PPTRIRTTTS (153 aa). O-linked (Man6P...) threonine glycans are attached at residues T317, T319, and T379. Disordered regions lie at residues 380–444 and 458–480; these read PTLG…PVPR and SPPTRIRTTTSGLPRGEPNQRPE. The span at 413 to 433 shows a compositional bias: low complexity; sequence PTAVATPPTPTTKNPRVSXPT. The O-glycosylated at seven sites with GalNAc stretch occupies residues 446-468; it reads TTKAPITRLETASPPTRIRTTTS. Positions 585 to 694 constitute a Peptidase S72 domain; that stretch reads RAPARFTAKF…MSIAVTGSGS (110 aa). Residues N623, N631, and N643 are each glycosylated (N-linked (GlcNAc...) asparagine). Cysteines 651 and 695 form a disulfide. The span at 706 to 717 shows a compositional bias: pro residues; it reads PKRVPSEAPPTE. The tract at residues 706–727 is disordered; that stretch reads PKRVPSEAPPTEVPDRDPEKSS. Basic and acidic residues predominate over residues 718–727; it reads VPDRDPEKSS. Residues 732–757 form a helical membrane-spanning segment; that stretch reads YLHTVIPAVVVAAILLIAGIIAMICY. Residues 758 to 764 carry the Nuclear localization signal motif; that stretch reads RKKRKGK. At T772 the chain carries Phosphothreonine. The segment at 801–877 is required for interaction with CAV3; that stretch reads LQEEKAPLPP…YRSPPPYVPP (77 aa). The disordered stretch occupies residues 805 to 877; that stretch reads KAPLPPPEYP…YRSPPPYVPP (73 aa). A compositionally biased stretch (polar residues) spans 814 to 828; the sequence is PNQSVPETTPLNQDT. A compositionally biased stretch (pro residues) spans 841–852; sequence NAPPYQPPPPFT. The required for binding DMD and UTRN stretch occupies residues 862–877; that stretch reads PKNMTPYRSPPPYVPP. Residues 871-874 carry the PPXY motif motif; sequence PPPY. A Phosphotyrosine; by SRC modification is found at Y874.

Monomer. Heterodimer of alpha- and beta-dystroglycan subunits which are the central components of the dystrophin-glycoprotein complex. This complex then can form a dystrophin-associated glycoprotein complex (DGC) which is composed of three subcomplexes: a cytoplasmic complex comprised of DMD (or UTRN), DTNA and a number of syntrophins, such as SNTB1, SNTB2, SNTG1 and SNTG2, the transmembrane dystroglycan complex, and the sarcoglycan-sarcospan complex. Interacts (via the N-terminal of alphaDAG1) with LARGE1; the interaction enhances laminin binding. Interacts with SGCD. Interacts with AGR2 and AGR3. Interacts (betaDAG1) with DMD; the interaction is inhibited by phosphorylation on the PPXY motif. Interacts (betaDAG1, via its PPXY motif) with UTRN (via its WWW and ZZ domains); the interaction is inhibited by phosphorylation on the PPXY motif. Interacts (betaDAG1, via its phosphorylated PPXY motif) with the SH2 domain-containing proteins, FYN, CSK, NCK and SHC. Interacts (betaDAG1) with CAV3 (via a central WW-like domain); the interaction disrupts the binding of DMD. BetaDAG1 directly interacts with ANK3, but not with ANK2; this interaction does not interfere with DMD-binding and is required for retention at costameres. Identified in a dystroglycan complex that contains at least PRX, DRP2, UTRN, DMD and DAG1. Interacts with POMGNT1. BetaDAG1 interacts with CD93. O-glycosylated. POMGNT1 catalyzes the initial addition of N-acetylglucosamine, giving rise to the GlcNAc(beta1-2)Man(alpha1-)O-Ser/Thr moiety and thus providing the necessary basis for the addition of further carbohydrate moieties. Heavily O-glycosylated comprising of up to two thirds of its mass and the carbohydrate composition differs depending on tissue type. Mucin-type O-glycosylation is important for ligand binding activity. O-mannosylation of alpha-DAG1 is found in high abundance in both brain and muscle where the most abundant glycan is Sia-alpha-2-3-Gal-beta-1-4-Glc-NAc-beta-1-2-Man. In muscle, glycosylation on Thr-317, Thr-319 and Thr-379 by a phosphorylated O-mannosyl glycan with the structure 2-(N-acetylamido)-2-deoxygalactosyl-beta-1,3-2-(N-acetylamido)-2-deoxyglucosyl-beta-1,4-6-phosphomannose is mediated by like-acetylglucosaminyltransferase (LARGE1) protein amd is required for laminin binding. O-glycosylated in the N-terminal region with a core 1 or possibly core 8 glycan. The brain form displays a unique glycosylation pattern which is absent in other tissues; this form shows enhanced binding to laminin LAMA5 compared to the skeletal muscle form. Post-translationally, N-glycosylated. In terms of processing, autolytic cleavage produces the alpha and beta subunits. In cutaneous cells, as well as in certain pathological conditions, shedding of beta-dystroglycan can occur releasing a peptide of about 30 kDa. SRC-mediated phosphorylation of the PPXY motif of the beta subunit recruits SH2 domain-containing proteins, but inhibits binding to WWW domain-containing proteins, DMD and UTRN. This phosphorylation also inhibits nuclear entry.

It localises to the secreted. It is found in the extracellular space. The protein localises to the cell membrane. The protein resides in the cytoplasm. Its subcellular location is the cytoskeleton. It localises to the nucleus. It is found in the nucleoplasm. The protein localises to the sarcolemma. The protein resides in the postsynaptic cell membrane. The dystroglycan complex is involved in a number of processes including laminin and basement membrane assembly, sarcolemmal stability, cell survival, peripheral nerve myelination, nodal structure, cell migration, and epithelial polarization. Functionally, extracellular peripheral glycoprotein that acts as a receptor for extracellular matrix proteins containing laminin-G domains. Receptor for laminin-2 (LAMA2) and agrin in peripheral nerve Schwann cells. Also acts as a receptor for laminin LAMA5. In terms of biological role, transmembrane protein that plays important roles in connecting the extracellular matrix to the cytoskeleton. Acts as a cell adhesion receptor in both muscle and non-muscle tissues. Receptor for both DMD and UTRN and, through these interactions, scaffolds axin to the cytoskeleton. Also functions in cell adhesion-mediated signaling and implicated in cell polarity. The sequence is that of Dystroglycan 1 from Sus scrofa (Pig).